Reading from the N-terminus, the 643-residue chain is Transmembrane 9 superfamily member 4 (643 aa).

Residues 1-23 form the signal peptide; sequence MAAAMIWWPRFLLLLCLTCKGST. The Extracellular portion of the chain corresponds to 24–282; it reads FYVPGVAPIN…TMSDVQIHWF (259 aa). The helical transmembrane segment at 283–303 threads the bilayer; the sequence is SIINSVVVVFFLSGILSMIII. The Cytoplasmic segment spans residues 304 to 347; sequence RTLRKDIANYNKEDDIEDTMEESGWKLVHGDVFRPPQYPMILSS. Residue Tyr313 is modified to Phosphotyrosine. The helical transmembrane segment at 348 to 368 threads the bilayer; that stretch reads LLGSGIQLFCMILIVIFVAML. At 369–377 the chain is on the extracellular side; the sequence is GMLSPSSRG. Residues 378 to 398 form a helical membrane-spanning segment; that stretch reads ALMTTACFLFMFMGVFGGFSA. Topologically, residues 399 to 417 are cytoplasmic; it reads GRLYRTLKGHRWKKGAFCT. The chain crosses the membrane as a helical span at residues 418–438; that stretch reads ATLYPGVVFGICFVLNCFIWG. Over 439-450 the chain is Extracellular; the sequence is KHSSGAVPFPTM. Residues 451 to 471 traverse the membrane as a helical segment; that stretch reads VALLCMWFGISLPLVYLGYYF. The Cytoplasmic segment spans residues 472–502; that stretch reads GFRKQPYDNPVRTNQIPRQIPEQRWYMNRFV. Residues 503-523 traverse the membrane as a helical segment; the sequence is GILMAGILPFGAMFIELFFIF. Topologically, residues 524–536 are extracellular; the sequence is SAIWENQFYYLFG. Residues 537-557 form a helical membrane-spanning segment; sequence FLFLVFIILVVSCSQISIVMV. Residues 558-571 lie on the Cytoplasmic side of the membrane; that stretch reads YFQLCAEDYRWWWR. A helical membrane pass occupies residues 572–592; the sequence is NFLVSGGSAFYVLVYAIFYFV. Residues 593-599 lie on the Extracellular side of the membrane; sequence NKLDIVE. A helical transmembrane segment spans residues 600–620; it reads FIPSLLYFGYTTLMVLSFWLL. At 621–643 the chain is on the cytoplasmic side; the sequence is TGTIGFYAAYMFVRKIYAAVKID.

This sequence belongs to the nonaspanin (TM9SF) (TC 9.A.2) family.

Its subcellular location is the membrane. The protein resides in the golgi apparatus. The protein localises to the early endosome. Functionally, associates with proteins harboring glycine-rich transmembrane domains and ensures their efficient localization to the cell surface. In Mus musculus (Mouse), this protein is Transmembrane 9 superfamily member 4 (Tm9sf4).